The chain runs to 138 residues: Small ribosomal subunit protein uS11c (138 aa).

It belongs to the universal ribosomal protein uS11 family. As to quaternary structure, part of the 30S ribosomal subunit.

It localises to the plastid. Its subcellular location is the chloroplast. This chain is Small ribosomal subunit protein uS11c, found in Illicium oligandrum (Star anise).